The following is a 456-amino-acid chain: PTS system sucrose-specific EIIBC component (456 aa).

Residues 4–87 enclose the PTS EIIB type-1 domain; it reads EQISCSLLPL…TQAAGISESS (84 aa). The active-site Phosphocysteine intermediate; for EIIB activity is cysteine 26. The 350-residue stretch at 107-456 folds into the PTS EIIC type-1 domain; the sequence is RLLSNIFVPI…LVLKYKTDAE (350 aa). 10 consecutive transmembrane segments (helical) span residues 112–132, 144–164, 181–201, 213–233, 247–267, 288–308, 329–349, 360–380, 388–408, and 428–448; these read IFVPIIPAIVASGLLMGLLGM, AIYIMLDMCSSAAFIILPILI, TLGGILTHPALTNAWGVAAGF, MIGYQGTVFPVLLAVWFMSIV, LILTPFLTVIISGFIALLIIG, AGWLAGLLFGGLYSVIVITGI, FLLPIWAMANVAQGGACLAVW, ITLPSAFSAMLGITEAAIFGI, FIAALIGGAAGGAWVVSVHVY, and LLNYIIGMVIAFGVAFTVSLV.

It localises to the cell inner membrane. It catalyses the reaction N(pros)-phospho-L-histidyl-[protein](out) + sucrose = sucrose 6(G)-phosphate(in) + L-histidyl-[protein]. The phosphoenolpyruvate-dependent sugar phosphotransferase system (sugar PTS), a major carbohydrate active transport system, catalyzes the phosphorylation of incoming sugar substrates concomitantly with their translocation across the cell membrane. This system is involved in sucrose transport. This is PTS system sucrose-specific EIIBC component from Salmonella typhimurium.